A 238-amino-acid polypeptide reads, in one-letter code: Ribonuclease PH (238 aa).

Phosphate contacts are provided by residues Arg86 and Gly124–Arg126.

This sequence belongs to the RNase PH family. Homohexameric ring arranged as a trimer of dimers.

The catalysed reaction is tRNA(n+1) + phosphate = tRNA(n) + a ribonucleoside 5'-diphosphate. Phosphorolytic 3'-5' exoribonuclease that plays an important role in tRNA 3'-end maturation. Removes nucleotide residues following the 3'-CCA terminus of tRNAs; can also add nucleotides to the ends of RNA molecules by using nucleoside diphosphates as substrates, but this may not be physiologically important. Probably plays a role in initiation of 16S rRNA degradation (leading to ribosome degradation) during starvation. The chain is Ribonuclease PH from Actinobacillus pleuropneumoniae serotype 5b (strain L20).